The primary structure comprises 883 residues: Pre-mRNA-splicing factor syf1 homolog (883 aa).

HAT repeat units follow at residues 13–45, 46–78, 88–120, 122–156, 158–190, 268–303, 368–406, 463–495, 531–565, 570–604, 642–676, and 678–712; these read INFEVEDVPYEEEILRNAYSVKHWLRYIDHKAK, APNNGVNMVYERALKELPGSYKIWHNYLRTRRK, PMYEEVNSAFERALVFMHKMPRIWMDYGAFMTS, CKITRTRHVFDRALRALPITQHGRIWPLYLQFVRR, EMPETALRVYRRYLKLFPEDTEEYVDYLQEADR, GLFDRARDIYEEAIQTVTTVRDFTQVFDEYAQFEEL, DKPAEIISTYTEAVQTVQPKQAVGKLHTLWVEFAKFYEA, KRKIAYYDDTETVQARLHRSLKVWSMYADLEES, NYFEEAYRAYEKGISLFKWPNVYDIWNSYLTKFLE, TKLERARDLFEQCLDQCPPEHAKYFYLLYAKLEEE, YGLPRTREIYEKAIESLPEQNMRHMCVKFAELETK, and GEVDRARAIYAHCSQVCDPRITADFWQTWKEFEVR. Disordered regions lie at residues 794 to 851 and 864 to 883; these read RGET…DEEG and IPAKVFGSLKPSNQGDSDGE. Residues 812–834 show a composition bias toward acidic residues; sequence DEIDIGDSDEDDEEEDDDEENEM. Polar residues-rich tracts occupy residues 835 to 844 and 873 to 883; these read TNENQASAAV and KPSNQGDSDGE.

It belongs to the crooked-neck family. Component of the NTC(Nineteen)/Prp19 complex composed of at least fand, Prp19,CG9667/ISY1 and Cdc5/CDC5L. Within the complex, interacts with Prp19 and ISY1/CG9667.

It localises to the nucleus. Functionally, subunit of the NTC(Nineteen)/Prp19 complex, which is part of the spliceosome. The complex participates in spliceosome assembly, its remodeling and is required for efficient spliceosome activation. Essential for efficient pre-mRNA splicing. In embryos, efficient pre-mRNA splicing of zygotic transcripts is essential during dynamic cellular processes that require rapid division and/or dramatic changes in gene expression such as blastoderm cellularization, tracheal branching morphogenesis, Malpighian morphogenesis and epidermal development. Part of its role in promoting embryo tracheal development is also due to specifically splicing bnl transcripts which results in the activation of the BNL-FGF pathway. In Drosophila melanogaster (Fruit fly), this protein is Pre-mRNA-splicing factor syf1 homolog.